The following is a 40-amino-acid chain: Light-harvesting protein B800/830/1020 beta-1 chain (40 aa).

Over 1-20 the chain is Cytoplasmic; that stretch reads ANDIRPLRDFEDEEAQEFHQ. A bacteriochlorophyll is bound by residues His19 and His37. A helical transmembrane segment spans residues 21–40; the sequence is AAVQAFFLYVAVAFVAHLPV.

This sequence belongs to the antenna complex beta subunit family. The core complex is formed by different alpha and beta chains, binding bacteriochlorophyll molecules, and arranged most probably in tetrameric structures disposed around the reaction center. The non-pigmented gamma chains may constitute additional components.

The protein localises to the cell inner membrane. Antenna complexes are light-harvesting systems, which transfer the excitation energy to the reaction centers. This is Light-harvesting protein B800/830/1020 beta-1 chain from Halorhodospira halochloris (Ectothiorhodospira halochloris).